The following is a 432-amino-acid chain: Transcriptional adapter 3-B (432 aa).

2 disordered regions span residues 90–124 and 275–315; these read HELGTPIKHSKPKKQKLDGKGSHASGPGPGRPKSR and SPVE…KSLE. Residues 293–305 are compositionally biased toward polar residues; it reads DGASTSPRSQNKP. A coiled-coil region spans residues 335-398; sequence ADDSEDEVLA…NEVMDAFRKI (64 aa).

It belongs to the NGG1 family.

It is found in the nucleus. In terms of biological role, functions as a component of the PCAF complex. The PCAF complex is capable of efficiently acetylating histones in a nucleosomal context. This Xenopus laevis (African clawed frog) protein is Transcriptional adapter 3-B (tada3-b).